A 100-amino-acid chain; its full sequence is Phosphoribosylformylglycinamidine synthase subunit PurS (100 aa).

Belongs to the PurS family. In terms of assembly, homodimer. Part of the FGAM synthase complex composed of 1 PurL, 1 PurQ and 2 PurS subunits.

The protein localises to the cytoplasm. It carries out the reaction N(2)-formyl-N(1)-(5-phospho-beta-D-ribosyl)glycinamide + L-glutamine + ATP + H2O = 2-formamido-N(1)-(5-O-phospho-beta-D-ribosyl)acetamidine + L-glutamate + ADP + phosphate + H(+). It functions in the pathway purine metabolism; IMP biosynthesis via de novo pathway; 5-amino-1-(5-phospho-D-ribosyl)imidazole from N(2)-formyl-N(1)-(5-phospho-D-ribosyl)glycinamide: step 1/2. Part of the phosphoribosylformylglycinamidine synthase complex involved in the purines biosynthetic pathway. Catalyzes the ATP-dependent conversion of formylglycinamide ribonucleotide (FGAR) and glutamine to yield formylglycinamidine ribonucleotide (FGAM) and glutamate. The FGAM synthase complex is composed of three subunits. PurQ produces an ammonia molecule by converting glutamine to glutamate. PurL transfers the ammonia molecule to FGAR to form FGAM in an ATP-dependent manner. PurS interacts with PurQ and PurL and is thought to assist in the transfer of the ammonia molecule from PurQ to PurL. This chain is Phosphoribosylformylglycinamidine synthase subunit PurS, found in Synechocystis sp. (strain ATCC 27184 / PCC 6803 / Kazusa).